The following is a 407-amino-acid chain: Succinyl-diaminopimelate desuccinylase (407 aa).

The segment covering 1-10 has biased composition (polar residues); sequence MSDIDNNLTS. Residues 1–20 are disordered; the sequence is MSDIDNNLTSQTHQQATHQQ. Low complexity predominate over residues 11–20; sequence QTHQQATHQQ. Histidine 93 lines the Zn(2+) pocket. Residue aspartate 95 is part of the active site. A Zn(2+)-binding site is contributed by aspartate 126. Catalysis depends on glutamate 160, which acts as the Proton acceptor. Residues glutamate 161, glutamate 189, and histidine 379 each contribute to the Zn(2+) site.

It belongs to the peptidase M20A family. DapE subfamily. Homodimer. Zn(2+) serves as cofactor. It depends on Co(2+) as a cofactor.

The catalysed reaction is N-succinyl-(2S,6S)-2,6-diaminopimelate + H2O = (2S,6S)-2,6-diaminopimelate + succinate. Its pathway is amino-acid biosynthesis; L-lysine biosynthesis via DAP pathway; LL-2,6-diaminopimelate from (S)-tetrahydrodipicolinate (succinylase route): step 3/3. Its function is as follows. Catalyzes the hydrolysis of N-succinyl-L,L-diaminopimelic acid (SDAP), forming succinate and LL-2,6-diaminopimelate (DAP), an intermediate involved in the bacterial biosynthesis of lysine and meso-diaminopimelic acid, an essential component of bacterial cell walls. The protein is Succinyl-diaminopimelate desuccinylase of Psychrobacter arcticus (strain DSM 17307 / VKM B-2377 / 273-4).